We begin with the raw amino-acid sequence, 50 residues long: Large ribosomal subunit protein eL40 (50 aa).

It belongs to the eukaryotic ribosomal protein eL40 family.

The chain is Large ribosomal subunit protein eL40 from Aeropyrum pernix (strain ATCC 700893 / DSM 11879 / JCM 9820 / NBRC 100138 / K1).